We begin with the raw amino-acid sequence, 244 residues long: NAD(P)H-quinone oxidoreductase subunit K (244 aa).

4 residues coordinate [4Fe-4S] cluster: Cys-51, Cys-52, Cys-116, and Cys-147.

The protein belongs to the complex I 20 kDa subunit family. As to quaternary structure, NDH-1 can be composed of about 15 different subunits; different subcomplexes with different compositions have been identified which probably have different functions. Requires [4Fe-4S] cluster as cofactor.

The protein localises to the cellular thylakoid membrane. The catalysed reaction is a plastoquinone + NADH + (n+1) H(+)(in) = a plastoquinol + NAD(+) + n H(+)(out). The enzyme catalyses a plastoquinone + NADPH + (n+1) H(+)(in) = a plastoquinol + NADP(+) + n H(+)(out). NDH-1 shuttles electrons from an unknown electron donor, via FMN and iron-sulfur (Fe-S) centers, to quinones in the respiratory and/or the photosynthetic chain. The immediate electron acceptor for the enzyme in this species is believed to be plastoquinone. Couples the redox reaction to proton translocation, and thus conserves the redox energy in a proton gradient. Cyanobacterial NDH-1 also plays a role in inorganic carbon-concentration. This chain is NAD(P)H-quinone oxidoreductase subunit K, found in Synechococcus sp. (strain JA-2-3B'a(2-13)) (Cyanobacteria bacterium Yellowstone B-Prime).